Reading from the N-terminus, the 79-residue chain is D-alanyl carrier protein (79 aa).

A Carrier domain is found at 1 to 77 (MDIKSEVLAI…KIVAGVTELC (77 aa)). S35 bears the O-(pantetheine 4'-phosphoryl)serine mark.

It belongs to the DltC family. In terms of processing, 4'-phosphopantetheine is transferred from CoA to a specific serine of apo-DCP.

Its subcellular location is the cytoplasm. The protein operates within cell wall biogenesis; lipoteichoic acid biosynthesis. In terms of biological role, carrier protein involved in the D-alanylation of lipoteichoic acid (LTA). The loading of thioester-linked D-alanine onto DltC is catalyzed by D-alanine--D-alanyl carrier protein ligase DltA. The DltC-carried D-alanyl group is further transferred to cell membrane phosphatidylglycerol (PG) by forming an ester bond, probably catalyzed by DltD. D-alanylation of LTA plays an important role in modulating the properties of the cell wall in Gram-positive bacteria, influencing the net charge of the cell wall. The sequence is that of D-alanyl carrier protein from Streptococcus agalactiae serotype Ia (strain ATCC 27591 / A909 / CDC SS700).